Consider the following 286-residue polypeptide: Aquaporin NIP1-3 (286 aa).

The disordered stretch occupies residues 1–44 (MAGGEHGVNGQHEETRAMEEGSRDHQARCENSEQDGGSKSSSNN). Basic and acidic residues predominate over residues 11-31 (QHEETRAMEEGSRDHQARCEN). Over residues 34–44 (QDGGSKSSSNN) the composition is skewed to polar residues. Helical transmembrane passes span 56–76 (VIAE…AVAV) and 84–104 (VTFP…VYSV). Positions 113–115 (NPA) match the NPA 1 motif. 3 helical membrane passes run 131–153 (VPAY…RALF), 172–192 (SLAM…GVAT), and 200–220 (LAGL…GPIS). An NPA 2 motif is present at residues 225–227 (NPA). The helical transmembrane segment at 239-259 (YTGIWVYIAGPVFGAVAGAWA) threads the bilayer.

This sequence belongs to the MIP/aquaporin (TC 1.A.8) family. NIP (TC 1.A.8.12) subfamily.

The protein resides in the membrane. Aquaporins facilitate the transport of water and small neutral solutes across cell membranes. This Oryza sativa subsp. japonica (Rice) protein is Aquaporin NIP1-3 (NIP1-3).